A 245-amino-acid chain; its full sequence is Homeobox protein goosecoid (245 aa).

The homeobox DNA-binding region spans 150–209; that stretch reads KRRHRTIFTDEQLEALENLFQETKYPDVGTREQLARKVHLREEKVEVWFKNRRAKWRRQK. The segment at 203–245 is disordered; sequence AKWRRQKRSSSEESENAQKWNKASKTSPEKRQEDGKSDLDSDS. A compositionally biased stretch (polar residues) spans 219–228; the sequence is AQKWNKASKT. Residues 229 to 245 are compositionally biased toward basic and acidic residues; sequence SPEKRQEDGKSDLDSDS.

This sequence belongs to the paired homeobox family. Bicoid subfamily.

The protein resides in the nucleus. In terms of biological role, involved in the development of the organizer region in the gastrula (Hensen node in chicken). The protein is Homeobox protein goosecoid (GSC) of Gallus gallus (Chicken).